The primary structure comprises 826 residues: Ferric-pyoverdine M114 receptor PbuA (826 aa).

The first 44 residues, 1 to 44 (MSASRFMLRPLTRALLMHGATRTRLAGTGLGLALTLTAAPYVQA), serve as a signal peptide directing secretion. The TonB box signature appears at 110–119 (DGNTVTVLGP). One can recognise a TBDR plug domain in the interval 160–271 (SLKETPQSVT…TAGGVNFVRK (112 aa)). The TBDR beta-barrel domain maps to 276 to 826 (TAHTQLSLSA…NFVMSVKADF (551 aa)). The short motif at 809–826 (GNFYGDPRNFVMSVKADF) is the TonB C-terminal box element.

This sequence belongs to the TonB-dependent receptor family.

The protein resides in the cell outer membrane. Functionally, specific receptor for the siderophore ferric pyoverdine (pseudobactin) M114. The protein is Ferric-pyoverdine M114 receptor PbuA (pbuA) of Pseudomonas sp. (strain M114).